The primary structure comprises 324 residues: o-succinylbenzoate synthase (324 aa).

The Proton donor role is filled by Lys135. Asp163, Glu192, and Asp215 together coordinate Mg(2+). Lys237 serves as the catalytic Proton acceptor.

It belongs to the mandelate racemase/muconate lactonizing enzyme family. MenC type 1 subfamily. The cofactor is a divalent metal cation.

The catalysed reaction is (1R,6R)-6-hydroxy-2-succinyl-cyclohexa-2,4-diene-1-carboxylate = 2-succinylbenzoate + H2O. The protein operates within quinol/quinone metabolism; 1,4-dihydroxy-2-naphthoate biosynthesis; 1,4-dihydroxy-2-naphthoate from chorismate: step 4/7. Its pathway is quinol/quinone metabolism; menaquinone biosynthesis. Converts 2-succinyl-6-hydroxy-2,4-cyclohexadiene-1-carboxylate (SHCHC) to 2-succinylbenzoate (OSB). This is o-succinylbenzoate synthase from Aliivibrio salmonicida (strain LFI1238) (Vibrio salmonicida (strain LFI1238)).